The primary structure comprises 326 residues: tRNA dimethylallyltransferase 2 (326 aa).

Residue 14-21 coordinates ATP; the sequence is GPTASGKT. 16–21 provides a ligand contact to substrate; that stretch reads TASGKT. The interval 39–42 is interaction with substrate tRNA; the sequence is DSMQ.

It belongs to the IPP transferase family. Monomer. Mg(2+) serves as cofactor.

The enzyme catalyses adenosine(37) in tRNA + dimethylallyl diphosphate = N(6)-dimethylallyladenosine(37) in tRNA + diphosphate. Catalyzes the transfer of a dimethylallyl group onto the adenine at position 37 in tRNAs that read codons beginning with uridine, leading to the formation of N6-(dimethylallyl)adenosine (i(6)A). The protein is tRNA dimethylallyltransferase 2 of Geotalea daltonii (strain DSM 22248 / JCM 15807 / FRC-32) (Geobacter daltonii).